Here is a 421-residue protein sequence, read N- to C-terminus: Serine hydroxymethyltransferase (421 aa).

(6S)-5,6,7,8-tetrahydrofolate contacts are provided by residues L121 and 125–127; that span reads GHL. K230 carries the post-translational modification N6-(pyridoxal phosphate)lysine.

It belongs to the SHMT family. Homodimer. Pyridoxal 5'-phosphate serves as cofactor.

It is found in the cytoplasm. It carries out the reaction (6R)-5,10-methylene-5,6,7,8-tetrahydrofolate + glycine + H2O = (6S)-5,6,7,8-tetrahydrofolate + L-serine. It participates in one-carbon metabolism; tetrahydrofolate interconversion. It functions in the pathway amino-acid biosynthesis; glycine biosynthesis; glycine from L-serine: step 1/1. Its function is as follows. Catalyzes the reversible interconversion of serine and glycine with tetrahydrofolate (THF) serving as the one-carbon carrier. This reaction serves as the major source of one-carbon groups required for the biosynthesis of purines, thymidylate, methionine, and other important biomolecules. Also exhibits THF-independent aldolase activity toward beta-hydroxyamino acids, producing glycine and aldehydes, via a retro-aldol mechanism. The chain is Serine hydroxymethyltransferase from Carboxydothermus hydrogenoformans (strain ATCC BAA-161 / DSM 6008 / Z-2901).